The primary structure comprises 593 residues: Arginine--tRNA ligase (593 aa).

A 'HIGH' region motif is present at residues 138–148 (ANPTGPLHVGH).

Belongs to the class-I aminoacyl-tRNA synthetase family. As to quaternary structure, monomer.

Its subcellular location is the cytoplasm. The enzyme catalyses tRNA(Arg) + L-arginine + ATP = L-arginyl-tRNA(Arg) + AMP + diphosphate. This chain is Arginine--tRNA ligase, found in Burkholderia cenocepacia (strain ATCC BAA-245 / DSM 16553 / LMG 16656 / NCTC 13227 / J2315 / CF5610) (Burkholderia cepacia (strain J2315)).